A 345-amino-acid polypeptide reads, in one-letter code: Dihydroorotate dehydrogenase (quinone) (345 aa).

FMN-binding positions include Ala65 to Lys69 and Thr89. Residue Lys69 coordinates substrate. Residue Asn114–Phe118 participates in substrate binding. Residues Asn146 and Asn179 each contribute to the FMN site. A substrate-binding site is contributed by Asn179. Ser182 serves as the catalytic Nucleophile. Residue Asn184 coordinates substrate. The FMN site is built by Lys224 and Thr252. Asn253 to Thr254 serves as a coordination point for substrate. Residues Gly275, Gly304, and Tyr325–Thr326 contribute to the FMN site.

It belongs to the dihydroorotate dehydrogenase family. Type 2 subfamily. As to quaternary structure, monomer. FMN is required as a cofactor.

Its subcellular location is the cell membrane. The enzyme catalyses (S)-dihydroorotate + a quinone = orotate + a quinol. It functions in the pathway pyrimidine metabolism; UMP biosynthesis via de novo pathway; orotate from (S)-dihydroorotate (quinone route): step 1/1. Catalyzes the conversion of dihydroorotate to orotate with quinone as electron acceptor. This chain is Dihydroorotate dehydrogenase (quinone), found in Janthinobacterium sp. (strain Marseille) (Minibacterium massiliensis).